The primary structure comprises 138 residues: Large ribosomal subunit protein uL13 (138 aa).

Belongs to the universal ribosomal protein uL13 family. In terms of assembly, part of the 50S ribosomal subunit.

This protein is one of the early assembly proteins of the 50S ribosomal subunit, although it is not seen to bind rRNA by itself. It is important during the early stages of 50S assembly. The polypeptide is Large ribosomal subunit protein uL13 (Picrophilus torridus (strain ATCC 700027 / DSM 9790 / JCM 10055 / NBRC 100828 / KAW 2/3)).